We begin with the raw amino-acid sequence, 732 residues long: MDTKVDNAGKCPVVHTHTAHGGRSNRDWWPNQLNLRILHQNSSLSNPLGTAFNYAEEFKKLDLEALKKDLFALMTDSQEWWPADFGHYGPLFIRMAWHSAGTYRTGDGRGGAGAGQQRFAPLNSWPDNVNLDKARRLLWPIKQKYGNQISWADLLVLTGNVALESMGFKTFGFAGGRADVWEPAEDVYWGSEDTWLGDKRYSGDRDLEKPLSAVQMGLIYVNPEGPNGNPDPLAAARDIRETFARMAMNDEETVALIAGGHTFGKTHGAGDAAHVGADPEAGDIEEQGFGWKSSYGTGKGGDTISSGLEVIWTTTPTKWSNNFFENLFGFEWELTKSPAGAHQWTPKNGAGAGIVPDAHDPSKRHAPSMLTTDLSLRFDPAYEKISRRFFENPDQFADAFARAWFKLTHRDMGPRVLYLGPEVPSEELIWQDPIPAVDHLLIDAKDIADLKEKILASGLPISQLVSTAWASAATFRGSDKRGGANGARIRLAPQKDWEVNQPTQLATVLATLEGIQKAFNDAQLSGKKVSLADLIVLAGSAAVEKAAKNAGHDIEVPFAPGRTDATQEQTDVESFAVLEPIADGFRNYQKGEYTISPEELLIDKAQLLTLTAPELTVLVGGLRVLNANTGQSQHGVFTKRPETLTNDFFVNLLDMGTAWKVSPDSKYVFEGRDRDTNEIKWTGTRIDLVFGSNSQLRALAEVYGQGDTQEKFVRDFVAAWTKVMNADRFDLA.

The N-terminal stretch at 1 to 45 (MDTKVDNAGKCPVVHTHTAHGGRSNRDWWPNQLNLRILHQNSSLS) is a signal peptide. A cross-link (tryptophyl-tyrosyl-methioninium (Trp-Tyr) (with M-246)) is located at residues 97–220 (WHSAGTYRTG…LSAVQMGLIY (124 aa)). The Proton acceptor role is filled by His-98. The segment at residues 220-246 (YVNPEGPNGNPDPLAAARDIRETFARM) is a cross-link (tryptophyl-tyrosyl-methioninium (Tyr-Met) (with W-97)). Heme b is bound at residue His-261.

This sequence belongs to the peroxidase family. Peroxidase/catalase subfamily. As to quaternary structure, homodimer or homotetramer. The cofactor is heme b. Formation of the three residue Trp-Tyr-Met cross-link is important for the catalase, but not the peroxidase activity of the enzyme.

It catalyses the reaction H2O2 + AH2 = A + 2 H2O. The enzyme catalyses 2 H2O2 = O2 + 2 H2O. Its function is as follows. Bifunctional enzyme with both catalase and broad-spectrum peroxidase activity. In Rhizobium rhizogenes (strain K84 / ATCC BAA-868) (Agrobacterium radiobacter), this protein is Catalase-peroxidase.